The following is a 163-amino-acid chain: Staphylokinase (163 aa).

An N-terminal signal peptide occupies residues 1–27 (MLKRSLLFLTVLLLLFSFSSITNEVSA).

It belongs to the staphylokinase family.

The protein localises to the secreted. Potent plasminogen activator that converts plasminogen into plasmin. It forms a 1:1 complex with plasmin, which in turn activates other plasminogen molecules. This chain is Staphylokinase (sak), found in Staphylococcus phage phi13 (Bacteriophage phi-13).